The chain runs to 630 residues: tRNA uridine 5-carboxymethylaminomethyl modification enzyme MnmG (630 aa).

Residue 14-19 coordinates FAD; the sequence is GGGHAG. Residue 282–296 coordinates NAD(+); sequence GTRYCPSIEDKVRKF.

Belongs to the MnmG family. As to quaternary structure, homodimer. Heterotetramer of two MnmE and two MnmG subunits. FAD serves as cofactor.

Its subcellular location is the cytoplasm. NAD-binding protein involved in the addition of a carboxymethylaminomethyl (cmnm) group at the wobble position (U34) of certain tRNAs, forming tRNA-cmnm(5)s(2)U34. The polypeptide is tRNA uridine 5-carboxymethylaminomethyl modification enzyme MnmG (Treponema pallidum (strain Nichols)).